The primary structure comprises 294 residues: MKILVTGGSGFIGKNLIYLLREKREFEVFGATVEETMDLTNPCSVQSVLEKTKPDFIVHLAALTFVPNNNPITFYLVNTIGTENLLRSIVDLNVAKLGVLCFSTAGIYGIQETKLLSESLTPKPVNHYSMSKHCMEHIVNKYRCFRGITVVRPFNVLGLGQNINFLVPKMVSAFVKKDKTIELGNLDSVRDFISVNDCCDIIYRLISKLIENETINICTGIGYSVYQIFQLLCEISMHQMEIKQNELFVRHDDIPQMIGDPSKLLNVLGNDYRFTSVRAILEEMYKNRLLELSI.

Residues 11–12 (FI), 38–39 (DL), 60–64 (LAALT), threonine 104, tyrosine 128, lysine 132, and phenylalanine 154 each bind NAD(+). The substrate site is built by threonine 104 and tyrosine 128. Residue tyrosine 128 is the Proton acceptor of the active site. Positions 155 and 190 each coordinate substrate.

It belongs to the NAD(P)-dependent epimerase/dehydratase family.

It catalyses the reaction GDP-6-deoxy-alpha-D-talose + NAD(+) = GDP-4-dehydro-alpha-D-rhamnose + NADH + H(+). It carries out the reaction GDP-6-deoxy-alpha-D-talose + NADP(+) = GDP-4-dehydro-alpha-D-rhamnose + NADPH + H(+). It participates in bacterial outer membrane biogenesis; LPS O-antigen biosynthesis. Catalyzes the conversion of GDP-4-dehydro-6-deoxy-D-mannose to GDP-6-deoxy-D-talose. The polypeptide is GDP-6-deoxy-D-talose 4-dehydrogenase (tld) (Aggregatibacter actinomycetemcomitans (Actinobacillus actinomycetemcomitans)).